Consider the following 169-residue polypeptide: S-ribosylhomocysteine lyase (169 aa).

The Fe cation site is built by histidine 54, histidine 58, and cysteine 128.

This sequence belongs to the LuxS family. In terms of assembly, homodimer. The cofactor is Fe cation.

The enzyme catalyses S-(5-deoxy-D-ribos-5-yl)-L-homocysteine = (S)-4,5-dihydroxypentane-2,3-dione + L-homocysteine. Involved in the synthesis of autoinducer 2 (AI-2) which is secreted by bacteria and is used to communicate both the cell density and the metabolic potential of the environment. The regulation of gene expression in response to changes in cell density is called quorum sensing. Catalyzes the transformation of S-ribosylhomocysteine (RHC) to homocysteine (HC) and 4,5-dihydroxy-2,3-pentadione (DPD). The protein is S-ribosylhomocysteine lyase of Shewanella woodyi (strain ATCC 51908 / MS32).